A 301-amino-acid polypeptide reads, in one-letter code: Tetrapeptide repeat homeobox protein 2 (301 aa).

Disordered stretches follow at residues 1 to 27 (MQDP…RTVY) and 273 to 301 (SLST…LLDL). 2 stretches are compositionally biased toward basic and acidic residues: residues 16 to 26 (PPRRQRQERTV) and 281 to 292 (YKEEDGFVDKNH). A DNA-binding region (homeobox) is located at residues 20 to 79 (QRQERTVYTESQQKVLEFYFQKDQYPNYDQRLNLAEMLSLREQQLQVWFKNRRAKLARER).

Belongs to the paired homeobox family.

The protein localises to the nucleus. Transcription factor expressed after fertilization required for zygotic genome activation (ZGA), a critical event in early embryonic development during which the developmental control passes from maternally provided mRNAs to the expression of the zygotic genome after fertilization. Binds and activates expression of key ZGA marker genes, such as NANOGNB, ZSCAN4, DUXB, KLF5 and DPPA3. Binds to regulatory DNA sequences containing a 5'-TAATCC-3' sequence motif. The chain is Tetrapeptide repeat homeobox protein 2 from Homo sapiens (Human).